We begin with the raw amino-acid sequence, 169 residues long: Peptide methionine sulfoxide reductase MsrA (169 aa).

Residue Cys-10 is part of the active site.

This sequence belongs to the MsrA Met sulfoxide reductase family.

It carries out the reaction L-methionyl-[protein] + [thioredoxin]-disulfide + H2O = L-methionyl-(S)-S-oxide-[protein] + [thioredoxin]-dithiol. It catalyses the reaction [thioredoxin]-disulfide + L-methionine + H2O = L-methionine (S)-S-oxide + [thioredoxin]-dithiol. In terms of biological role, has an important function as a repair enzyme for proteins that have been inactivated by oxidation. Catalyzes the reversible oxidation-reduction of methionine sulfoxide in proteins to methionine. The protein is Peptide methionine sulfoxide reductase MsrA of Streptococcus uberis (strain ATCC BAA-854 / 0140J).